The primary structure comprises 214 residues: Cell division protein SepF (214 aa).

The interval 23-70 (YYDDRAPSRGFPRPRFDDGYGRYDGDDYDDPRREPADCPPPAGYRGGY) is disordered. A compositionally biased stretch (basic and acidic residues) spans 36 to 58 (PRFDDGYGRYDGDDYDDPRREPA).

Belongs to the SepF family. In terms of assembly, homodimer. Interacts with FtsZ.

It is found in the cytoplasm. Cell division protein that is part of the divisome complex and is recruited early to the Z-ring. Probably stimulates Z-ring formation, perhaps through the cross-linking of FtsZ protofilaments. Its function overlaps with FtsA. The polypeptide is Cell division protein SepF (Mycolicibacterium paratuberculosis (strain ATCC BAA-968 / K-10) (Mycobacterium paratuberculosis)).